A 132-amino-acid polypeptide reads, in one-letter code: Interleukin-5 (132 aa).

Positions 1–19 are cleaved as a signal peptide; it reads MRMLLHLSILTLACVWTFA. 3 N-linked (GlcNAc...) asparagine glycosylation sites follow: Asn-45, Asn-74, and Asn-88.

The protein belongs to the IL-5 family. In terms of assembly, homodimer; disulfide-linked. Interacts with IL5RA. Interacts with CSF2RB.

It localises to the secreted. In terms of biological role, homodimeric cytokine expressed predominantly by T-lymphocytes and NK cells that plays an important role in the survival, differentiation, and chemotaxis of eosinophils. Also acts on activated and resting B-cells to induce immunoglobulin production, growth, and differentiation. Mechanistically, exerts its biological effects through a receptor composed of IL5RA subunit and the cytokine receptor common subunit beta/CSF2RB. Binding to the receptor leads to activation of various kinases including LYN, SYK and JAK2 and thereby propagates signals through the RAS-MAPK and JAK-STAT5 pathways respectively. The chain is Interleukin-5 (IL5) from Sigmodon hispidus (Hispid cotton rat).